A 201-amino-acid chain; its full sequence is Glycerol-3-phosphate acyltransferase (201 aa).

The next 5 membrane-spanning stretches (helical) occupy residues 4–24 (LVAATLGGYLLGSVPFGLVLT), 55–75 (LATLLLDGGKGAIAVGLVWVL), 80–100 (MVPVAGFAAVLGHNFPVWLGF), 110–130 (IGTLLAAAWPVGLACIGTWLV), and 152–174 (FALYFAGPQYALMAAGLAVMGFY).

Belongs to the PlsY family. In terms of assembly, probably interacts with PlsX.

It localises to the cell inner membrane. The enzyme catalyses an acyl phosphate + sn-glycerol 3-phosphate = a 1-acyl-sn-glycero-3-phosphate + phosphate. It participates in lipid metabolism; phospholipid metabolism. In terms of biological role, catalyzes the transfer of an acyl group from acyl-phosphate (acyl-PO(4)) to glycerol-3-phosphate (G3P) to form lysophosphatidic acid (LPA). This enzyme utilizes acyl-phosphate as fatty acyl donor, but not acyl-CoA or acyl-ACP. In Paramagnetospirillum magneticum (strain ATCC 700264 / AMB-1) (Magnetospirillum magneticum), this protein is Glycerol-3-phosphate acyltransferase.